Consider the following 397-residue polypeptide: DnaJ homolog subfamily A member 1 (397 aa).

Residues 6 to 68 (TYYDVLGVKP…KKRELYDKGG (63 aa)) form the J domain. K66 carries the N6-acetyllysine modification. S83 is modified (phosphoserine). A CR-type zinc finger spans residues 121 to 205 (GATRKLALQK…CNGRKIVREK (85 aa)). The Zn(2+) site is built by C134, C137, C150, C153, C177, C180, C193, and C196. CXXCXGXG motif repeat units follow at residues 134 to 141 (CDKCEGRG), 150 to 157 (CPNCRGTG), 177 to 184 (CMECQGHG), and 193 to 200 (CKSCNGRK). S335 carries the post-translational modification Phosphoserine. The interval 352–397 (VEETDEMDQVELVDFDPNQERRRHYNGEAYEDDEHHPRGGVQCQTS) is disordered. The span at 353-365 (EETDEMDQVELVD) shows a compositional bias: acidic residues. Position 381 is a phosphotyrosine (Y381). C394 bears the Cysteine methyl ester mark. C394 carries S-farnesyl cysteine lipidation. A propeptide spans 395–397 (QTS) (removed in mature form).

As to quaternary structure, identified in a complex with HSPA1B and BAX. Interacts with RNF207.

Its subcellular location is the membrane. The protein resides in the cytoplasm. It is found in the microsome. It localises to the mitochondrion. The protein localises to the nucleus. Its subcellular location is the perinuclear region. Co-chaperone for HSPA8/Hsc70. Plays a role in protein transport into mitochondria via its role as co-chaperone. Functions as co-chaperone for HSPA1B and negatively regulates the translocation of BAX from the cytosol to mitochondria in response to cellular stress, thereby protecting cells against apoptosis. Stimulates ATP hydrolysis, but not the folding of unfolded proteins mediated by HSPA1A (in vitro). Promotes apoptosis in response to cellular stress mediated by exposure to anisomycin or UV. The protein is DnaJ homolog subfamily A member 1 (DNAJA1) of Chlorocebus aethiops (Green monkey).